The chain runs to 259 residues: tRNA pseudouridine synthase A (259 aa).

The active-site Nucleophile is the Asp-52. Tyr-110 provides a ligand contact to substrate.

Belongs to the tRNA pseudouridine synthase TruA family. In terms of assembly, homodimer.

The enzyme catalyses uridine(38/39/40) in tRNA = pseudouridine(38/39/40) in tRNA. Its function is as follows. Formation of pseudouridine at positions 38, 39 and 40 in the anticodon stem and loop of transfer RNAs. This Coprothermobacter proteolyticus (strain ATCC 35245 / DSM 5265 / OCM 4 / BT) protein is tRNA pseudouridine synthase A.